A 266-amino-acid chain; its full sequence is MPDVTLTTLQGLKQSGEKIAMLTCYDATFAHTASQAGVDVLLVGDSLGMVLQGHDSTLPVSNEEMAYHTACVKRGNKGSLIVTDLAFESSHSVAQTLADAVRLMQAGAHMVKLEGGVWLAEPIARLAQMGVPVCAHLGLTPQAVNLFGGFKVQGRQETQARQLRADAIALEQAGAAMLLLECVPSVLAEEITQAVKIPVIGIGAGAATDGQVLVMHDMLGLSLTGRSPKFVKDFMQGQESIPAAIAAYVRAVKDVSFPAAEHGFNA.

Residues aspartate 45 and aspartate 84 each contribute to the Mg(2+) site. Residues 45 to 46 (DS), aspartate 84, and lysine 112 each bind 3-methyl-2-oxobutanoate. Glutamate 114 provides a ligand contact to Mg(2+). Catalysis depends on glutamate 181, which acts as the Proton acceptor.

This sequence belongs to the PanB family. In terms of assembly, homodecamer; pentamer of dimers. The cofactor is Mg(2+).

It localises to the cytoplasm. The enzyme catalyses 3-methyl-2-oxobutanoate + (6R)-5,10-methylene-5,6,7,8-tetrahydrofolate + H2O = 2-dehydropantoate + (6S)-5,6,7,8-tetrahydrofolate. It functions in the pathway cofactor biosynthesis; (R)-pantothenate biosynthesis; (R)-pantoate from 3-methyl-2-oxobutanoate: step 1/2. In terms of biological role, catalyzes the reversible reaction in which hydroxymethyl group from 5,10-methylenetetrahydrofolate is transferred onto alpha-ketoisovalerate to form ketopantoate. The polypeptide is 3-methyl-2-oxobutanoate hydroxymethyltransferase 2 (Pseudomonas aeruginosa (strain ATCC 15692 / DSM 22644 / CIP 104116 / JCM 14847 / LMG 12228 / 1C / PRS 101 / PAO1)).